The sequence spans 272 residues: Shikimate dehydrogenase (NADP(+)) (272 aa).

Residues 14–16 (SKS) and threonine 61 each bind shikimate. Catalysis depends on lysine 65, which acts as the Proton acceptor. Glutamate 77 provides a ligand contact to NADP(+). Shikimate is bound by residues asparagine 86 and aspartate 102. NADP(+)-binding positions include 126–130 (GAGGA), 149–154 (NRTASR), and methionine 213. Tyrosine 215 contacts shikimate. Position 237 (glycine 237) interacts with NADP(+).

This sequence belongs to the shikimate dehydrogenase family. In terms of assembly, homodimer.

It catalyses the reaction shikimate + NADP(+) = 3-dehydroshikimate + NADPH + H(+). Its pathway is metabolic intermediate biosynthesis; chorismate biosynthesis; chorismate from D-erythrose 4-phosphate and phosphoenolpyruvate: step 4/7. Functionally, involved in the biosynthesis of the chorismate, which leads to the biosynthesis of aromatic amino acids. Catalyzes the reversible NADPH linked reduction of 3-dehydroshikimate (DHSA) to yield shikimate (SA). The sequence is that of Shikimate dehydrogenase (NADP(+)) from Salmonella choleraesuis (strain SC-B67).